The chain runs to 322 residues: Ribonuclease Z (322 aa).

Zn(2+) contacts are provided by histidine 60, histidine 62, aspartate 64, histidine 65, histidine 140, aspartate 210, and histidine 270. Aspartate 64 (proton acceptor) is an active-site residue.

This sequence belongs to the RNase Z family. Homodimer. Zn(2+) is required as a cofactor.

It catalyses the reaction Endonucleolytic cleavage of RNA, removing extra 3' nucleotides from tRNA precursor, generating 3' termini of tRNAs. A 3'-hydroxy group is left at the tRNA terminus and a 5'-phosphoryl group is left at the trailer molecule.. Its function is as follows. Zinc phosphodiesterase, which displays some tRNA 3'-processing endonuclease activity. Probably involved in tRNA maturation, by removing a 3'-trailer from precursor tRNA. This Methanococcus aeolicus (strain ATCC BAA-1280 / DSM 17508 / OCM 812 / Nankai-3) protein is Ribonuclease Z.